We begin with the raw amino-acid sequence, 236 residues long: Phycocyanobilin:ferredoxin oxidoreductase (236 aa).

The protein belongs to the HY2 family.

The enzyme catalyses (2R,3Z)-phycocyanobilin + 4 oxidized [2Fe-2S]-[ferredoxin] = biliverdin IXalpha + 4 reduced [2Fe-2S]-[ferredoxin] + 4 H(+). Catalyzes the four-electron reduction of biliverdin IX-alpha (2-electron reduction at both the A and D rings); the reaction proceeds via an isolatable 2-electron intermediate, 181,182-dihydrobiliverdin. This chain is Phycocyanobilin:ferredoxin oxidoreductase (pcyA), found in Thermosynechococcus vestitus (strain NIES-2133 / IAM M-273 / BP-1).